Here is a 100-residue protein sequence, read N- to C-terminus: Putative antiporter subunit mnhF2 (100 aa).

The next 3 membrane-spanning stretches (helical) occupy residues 5–25 (FTQIFIISALVIFGMALLVCL), 38–60 (VVSFDASSAVVMSIVGVMSVIFN), and 65–87 (LDSIMLIAIISFVSSVSISRFIG).

Belongs to the CPA3 antiporters (TC 2.A.63) subunit F family. As to quaternary structure, may form a heterooligomeric complex that consists of seven subunits: mnhA2, mnhB2, mnhC2, mnhD2, mnhE2, mnhF2 and mnhG2.

The protein localises to the cell membrane. This Staphylococcus epidermidis (strain ATCC 35984 / DSM 28319 / BCRC 17069 / CCUG 31568 / BM 3577 / RP62A) protein is Putative antiporter subunit mnhF2 (mnhF2).